Here is a 370-residue protein sequence, read N- to C-terminus: Cytochrome b (370 aa).

4 helical membrane-spanning segments follow: residues 30–50, 74–96, 109–129, and 175–195; these read FGSM…FLAF, WVFR…LHIF, VWMS…MGYV, and FFVL…GHLI. Residues histidine 80 and histidine 94 each contribute to the heme b site. Heme b-binding residues include histidine 179 and histidine 193. Histidine 198 is a binding site for a ubiquinone. 4 helical membrane passes run 221–240, 284–304, 316–336, and 342–362; these read YLGK…VLSL, VLGV…ALVN, FLVF…QCTV, and ILSP…LFIF.

The protein belongs to the cytochrome b family. As to quaternary structure, the main subunits of complex b-c1 are: cytochrome b, cytochrome c1 and the Rieske protein. Heme b is required as a cofactor.

It localises to the mitochondrion inner membrane. Its function is as follows. Component of the ubiquinol-cytochrome c reductase complex (complex III or cytochrome b-c1 complex) that is part of the mitochondrial respiratory chain. The b-c1 complex mediates electron transfer from ubiquinol to cytochrome c. Contributes to the generation of a proton gradient across the mitochondrial membrane that is then used for ATP synthesis. The protein is Cytochrome b of Caenorhabditis elegans.